A 498-amino-acid polypeptide reads, in one-letter code: Pup deamidase/depupylase (498 aa).

Position 6–10 (6–10 (GTEVE)) interacts with ATP. Mg(2+) contacts are provided by Glu8 and Tyr93. Asp95 (proton acceptor) is an active-site residue. Glu100 contributes to the Mg(2+) binding site. 102–103 (SA) serves as a coordination point for ATP. Residue His156 participates in Mg(2+) binding. Positions 158 and 240 each coordinate ATP. His242 serves as a coordination point for Mg(2+).

Belongs to the Pup ligase/Pup deamidase family. Pup deamidase subfamily. The cofactor is ATP.

It catalyses the reaction [prokaryotic ubiquitin-like protein]-C-terminal-L-glutamine + H2O = [prokaryotic ubiquitin-like protein]-C-terminal-L-glutamate + NH4(+). It functions in the pathway protein degradation; proteasomal Pup-dependent pathway. In terms of biological role, specifically catalyzes the deamidation of the C-terminal glutamine of the prokaryotic ubiquitin-like protein Pup to glutamate, thereby rendering Pup competent for conjugation. Probably also displays depupylase (DPUP) activity, removing conjugated Pup from target proteins; thus may be involved in the recycling of Pup and may function similarly to deubiquitinases (DUBs) in eukaryotes to prevent or promote proteasomal degradation of certain proteins. The sequence is that of Pup deamidase/depupylase (dop) from Mycolicibacterium smegmatis (strain ATCC 700084 / mc(2)155) (Mycobacterium smegmatis).